The following is a 667-amino-acid chain: Protein OS-9 (667 aa).

An N-terminal signal peptide occupies residues 1–25 (MAAETLLSSLLGLLLLGLLLPATLT). One can recognise an MRH domain in the interval 108–230 (APCLLKTKDW…TIRTPRLCPH (123 aa)). A disulfide bridge connects residues Cys-110 and Cys-123. A mannooligosaccharide derivative contacts are provided by Trp-117, Trp-118, and Gln-130. An N-linked (GlcNAc...) asparagine glycan is attached at Asn-177. 2 disulfide bridges follow: Cys-181–Cys-216 and Cys-196–Cys-228. A mannooligosaccharide derivative contacts are provided by Asp-182, Arg-188, Glu-212, and Tyr-218. Disordered regions lie at residues 262 to 450 (QADS…SDRE), 506 to 541 (EKQS…EHRV), and 636 to 667 (ERQR…EFDF). 3 stretches are compositionally biased toward basic and acidic residues: residues 263–279 (ADSK…RQDP), 304–328 (ENSK…KEET), and 396–408 (PSRE…KGDP). Over residues 410 to 429 (QQNEVEEEEDDEDEDEDEDE) the composition is skewed to acidic residues. Residues 430 to 450 (RQLLGEFEKELEGILLPSDRE) show a composition bias toward basic and acidic residues. Basic residues predominate over residues 514–523 (KKHRKRRVVP). Residues 636–647 (ERQRQKELESNY) show a composition bias toward basic and acidic residues.

Belongs to the OS-9 family. In terms of assembly, component of the HRD1 complex, which comprises at least SYNV1/HRD1, DERL1/2, FAM8A1, HERPUD1/HERP, OS9, SEL1L and UBE2J1. FAM8A1 is stabilized by interaction with SYNV1, which prevents its proteasomal degradation. OS9 and UBE2J1 recruitment to the complex may be mediated by SEL1L. Through this complex, may interact with ERLEC1 and HSPA5. Interacts (via C-terminus) with CPNE6 (via second C2 domain); this interaction occurs in a calcium-dependent manner in vitro. Interacts with CREB3. Post-translationally, intramolecular disulfide bonds.

The protein localises to the endoplasmic reticulum lumen. Lectin component of the HRD1 complex, which functions in endoplasmic reticulum (ER) quality control and ER-associated degradation (ERAD). Specifically recognizes and binds improperly folded glycoproteins as well as hyperglycosylated proteins, retain them in the ER, and transfers them to the ubiquitination machinery and promote their degradation. Possible targets include TRPV4 as well as hyperglycosylated HSP90B1. This Bos taurus (Bovine) protein is Protein OS-9 (OS9).